The chain runs to 107 residues: uncharacterized protein (107 aa).

The N-terminal stretch at 1–18 (MRTLMLIILSILIYLSSA) is a signal peptide.

This is an uncharacterized protein from Caenorhabditis elegans.